The following is a 286-amino-acid chain: Probable endonuclease 4 (286 aa).

Positions 67, 107, 146, 180, 183, 217, 230, 232, and 262 each coordinate Zn(2+).

It belongs to the AP endonuclease 2 family. Requires Zn(2+) as cofactor.

The catalysed reaction is Endonucleolytic cleavage to 5'-phosphooligonucleotide end-products.. Endonuclease IV plays a role in DNA repair. It cleaves phosphodiester bonds at apurinic or apyrimidinic (AP) sites, generating a 3'-hydroxyl group and a 5'-terminal sugar phosphate. In Methanosphaerula palustris (strain ATCC BAA-1556 / DSM 19958 / E1-9c), this protein is Probable endonuclease 4.